Here is a 1023-residue protein sequence, read N- to C-terminus: StAR-related lipid transfer protein 8 (1023 aa).

Disordered stretches follow at residues 46–67 and 82–161; these read PMGSSDLLAPPSPGLPATSSCE and TVSL…KVSK. Positions 99-114 are enriched in polar residues; that stretch reads PSSSDRPLLSPTQGQE. Ser108 is modified (phosphoserine). The span at 120–130 shows a compositional bias: basic residues; sequence AKKRHRNRSFL. Polar residues predominate over residues 143–161; sequence GSQQAEPKHSPATSEKVSK. Asymmetric dimethylarginine is present on Arg169. A phosphoserine mark is found at Ser235 and Ser238. Positions 387-397 are enriched in low complexity; sequence PAQAPAEAEPV. Disordered regions lie at residues 387-461 and 467-486; these read PAQA…MNEA and LAGLQASMPRERRDSGVGAS. Residues 441–459 are compositionally biased toward polar residues; that stretch reads ISDTVASSSELDSSGNSMN. A phosphoserine mark is found at Ser498 and Ser506. A Rho-GAP domain is found at 573 to 777; sequence PPLIHVQRTG…HMISDCKKLF (205 aa). The disordered stretch occupies residues 733 to 757; that stretch reads KKDSPSPRIKSKRSLIGRPGPRDLS. The START domain maps to 809 to 1017; it reads AQAAGVSLSL…RDSFPTLQAA (209 aa).

In terms of assembly, binds both the SH2 and PTB domains of TNS1. In terms of tissue distribution, widely expressed with highest levels in kidney, lung and placenta.

The protein localises to the cell junction. Its subcellular location is the focal adhesion. In terms of biological role, accelerates GTPase activity of RHOA and CDC42, but not RAC1. Stimulates the hydrolysis of phosphatidylinositol 4,5-bisphosphate by PLCD1. In Homo sapiens (Human), this protein is StAR-related lipid transfer protein 8 (STARD8).